Consider the following 343-residue polypeptide: Thiamine-phosphate synthase (343 aa).

The tract at residues 1–123 is unknown; that stretch reads MQQASPTAIA…GACCKQLRYR (123 aa). The thiamine-phosphate synthase stretch occupies residues 124-343; the sequence is VYALESGLLG…LLTQLSRINP (220 aa). 4-amino-2-methyl-5-(diphosphooxymethyl)pyrimidine is bound by residues 171–175 and asparagine 203; that span reads QYRDK. Positions 204 and 223 each coordinate Mg(2+). 4-amino-2-methyl-5-(diphosphooxymethyl)pyrimidine is bound at residue serine 242. 268–270 is a binding site for 2-[(2R,5Z)-2-carboxy-4-methylthiazol-5(2H)-ylidene]ethyl phosphate; the sequence is TPT. Lysine 271 lines the 4-amino-2-methyl-5-(diphosphooxymethyl)pyrimidine pocket. A 2-[(2R,5Z)-2-carboxy-4-methylthiazol-5(2H)-ylidene]ethyl phosphate-binding site is contributed by glycine 298.

Belongs to the thiamine-phosphate synthase family. The cofactor is Mg(2+).

The enzyme catalyses 2-[(2R,5Z)-2-carboxy-4-methylthiazol-5(2H)-ylidene]ethyl phosphate + 4-amino-2-methyl-5-(diphosphooxymethyl)pyrimidine + 2 H(+) = thiamine phosphate + CO2 + diphosphate. It carries out the reaction 2-(2-carboxy-4-methylthiazol-5-yl)ethyl phosphate + 4-amino-2-methyl-5-(diphosphooxymethyl)pyrimidine + 2 H(+) = thiamine phosphate + CO2 + diphosphate. The catalysed reaction is 4-methyl-5-(2-phosphooxyethyl)-thiazole + 4-amino-2-methyl-5-(diphosphooxymethyl)pyrimidine + H(+) = thiamine phosphate + diphosphate. It functions in the pathway cofactor biosynthesis; thiamine diphosphate biosynthesis; thiamine phosphate from 4-amino-2-methyl-5-diphosphomethylpyrimidine and 4-methyl-5-(2-phosphoethyl)-thiazole: step 1/1. In terms of biological role, condenses 4-methyl-5-(beta-hydroxyethyl)thiazole monophosphate (THZ-P) and 2-methyl-4-amino-5-hydroxymethyl pyrimidine pyrophosphate (HMP-PP) to form thiamine monophosphate (TMP). In Synechocystis sp. (strain ATCC 27184 / PCC 6803 / Kazusa), this protein is Thiamine-phosphate synthase.